The sequence spans 307 residues: Geranylgeranyl diphosphate synthase (307 aa).

Isopentenyl diphosphate contacts are provided by K52, R55, and H86. 2 residues coordinate Mg(2+): D93 and D99. R104 is a binding site for (2E,6E)-farnesyl diphosphate. R105 contacts isopentenyl diphosphate. (2E,6E)-farnesyl diphosphate is bound by residues K188, T189, and Q226.

It belongs to the FPP/GGPP synthase family. Requires Mg(2+) as cofactor.

It carries out the reaction isopentenyl diphosphate + (2E,6E)-farnesyl diphosphate = (2E,6E,10E)-geranylgeranyl diphosphate + diphosphate. It participates in isoprenoid biosynthesis; geranylgeranyl diphosphate biosynthesis; geranylgeranyl diphosphate from farnesyl diphosphate and isopentenyl diphosphate: step 1/1. In terms of biological role, catalyzes the condensation of farnesyl diphosphate (FPP) and isopentenyl diphosphate (IPP) to yield geranylgeranyl diphosphate (GGPP) needed for biosynthesis of carotenoids and diterpenes. This chain is Geranylgeranyl diphosphate synthase (crtE), found in Pseudescherichia vulneris (Escherichia vulneris).